Reading from the N-terminus, the 206-residue chain is Ribosomal RNA large subunit methyltransferase E (206 aa).

S-adenosyl-L-methionine contacts are provided by G60, W62, D80, D96, and D121. K161 acts as the Proton acceptor in catalysis.

This sequence belongs to the class I-like SAM-binding methyltransferase superfamily. RNA methyltransferase RlmE family.

The protein localises to the cytoplasm. It catalyses the reaction uridine(2552) in 23S rRNA + S-adenosyl-L-methionine = 2'-O-methyluridine(2552) in 23S rRNA + S-adenosyl-L-homocysteine + H(+). Its function is as follows. Specifically methylates the uridine in position 2552 of 23S rRNA at the 2'-O position of the ribose in the fully assembled 50S ribosomal subunit. In Hahella chejuensis (strain KCTC 2396), this protein is Ribosomal RNA large subunit methyltransferase E.